Here is a 546-residue protein sequence, read N- to C-terminus: Chaperonin GroEL 3 (546 aa).

ATP contacts are provided by residues 30–33 (TLGP), lysine 51, 87–91 (DGTTT), glycine 415, and aspartate 496.

The protein belongs to the chaperonin (HSP60) family. As to quaternary structure, forms a cylinder of 14 subunits composed of two heptameric rings stacked back-to-back. Interacts with the co-chaperonin GroES.

The protein resides in the cytoplasm. It carries out the reaction ATP + H2O + a folded polypeptide = ADP + phosphate + an unfolded polypeptide.. In terms of biological role, together with its co-chaperonin GroES, plays an essential role in assisting protein folding. The GroEL-GroES system forms a nano-cage that allows encapsulation of the non-native substrate proteins and provides a physical environment optimized to promote and accelerate protein folding. The sequence is that of Chaperonin GroEL 3 from Bradyrhizobium diazoefficiens (strain JCM 10833 / BCRC 13528 / IAM 13628 / NBRC 14792 / USDA 110).